Consider the following 160-residue polypeptide: ATP synthase subunit b (160 aa).

The chain crosses the membrane as a helical span at residues 13 to 33 (VNLAIVIGVLVWFLRGFLGGI).

The protein belongs to the ATPase B chain family. In terms of assembly, F-type ATPases have 2 components, F(1) - the catalytic core - and F(0) - the membrane proton channel. F(1) has five subunits: alpha(3), beta(3), gamma(1), delta(1), epsilon(1). F(0) has four main subunits: a(1), b(1), b'(1) and c(10-14). The alpha and beta chains form an alternating ring which encloses part of the gamma chain. F(1) is attached to F(0) by a central stalk formed by the gamma and epsilon chains, while a peripheral stalk is formed by the delta, b and b' chains.

It is found in the cellular thylakoid membrane. Its function is as follows. F(1)F(0) ATP synthase produces ATP from ADP in the presence of a proton or sodium gradient. F-type ATPases consist of two structural domains, F(1) containing the extramembraneous catalytic core and F(0) containing the membrane proton channel, linked together by a central stalk and a peripheral stalk. During catalysis, ATP synthesis in the catalytic domain of F(1) is coupled via a rotary mechanism of the central stalk subunits to proton translocation. Functionally, component of the F(0) channel, it forms part of the peripheral stalk, linking F(1) to F(0). This Parasynechococcus marenigrum (strain WH8102) protein is ATP synthase subunit b.